Here is a 318-residue protein sequence, read N- to C-terminus: Ribose-phosphate pyrophosphokinase (318 aa).

ATP-binding positions include 43–45 (DGE) and 102–103 (RQ). Mg(2+) contacts are provided by H136 and D176. K199 is a catalytic residue. D-ribose 5-phosphate is bound by residues R201, D225, and 229-233 (DTAGT).

This sequence belongs to the ribose-phosphate pyrophosphokinase family. Class I subfamily. In terms of assembly, homohexamer. The cofactor is Mg(2+).

The protein localises to the cytoplasm. The enzyme catalyses D-ribose 5-phosphate + ATP = 5-phospho-alpha-D-ribose 1-diphosphate + AMP + H(+). It participates in metabolic intermediate biosynthesis; 5-phospho-alpha-D-ribose 1-diphosphate biosynthesis; 5-phospho-alpha-D-ribose 1-diphosphate from D-ribose 5-phosphate (route I): step 1/1. Involved in the biosynthesis of the central metabolite phospho-alpha-D-ribosyl-1-pyrophosphate (PRPP) via the transfer of pyrophosphoryl group from ATP to 1-hydroxyl of ribose-5-phosphate (Rib-5-P). This chain is Ribose-phosphate pyrophosphokinase, found in Listeria ivanovii.